The chain runs to 551 residues: Solute carrier family 22 member 3 (551 aa).

A helical membrane pass occupies residues 21–41; the sequence is VFLLLCLTGVTFAFLFVGVVF. 3 N-linked (GlcNAc...) asparagine glycosylation sites follow: Asn-72, Asn-99, and Asn-114. The chain crosses the membrane as a helical span at residues 177–197; it reads LIIYLISCFGVGITGVVVAFA. N-linked (GlcNAc...) asparagine glycosylation occurs at Asn-199. Helical transmembrane passes span 236-256 and 264-284; these read IVGI…PGIA and GIQL…WVVP. The short motif at 284–288 is the Proline-rich sequence element; sequence PESPR. A glycan (N-linked (GlcNAc...) asparagine) is linked at Asn-317. Transmembrane regions (helical) follow at residues 376 to 396, 464 to 484, and 493 to 513; these read IDFF…LLTI, GVSL…FLLF, and LPLI…MLLP.

Belongs to the major facilitator (TC 2.A.1) superfamily. Organic cation transporter (TC 2.A.1.19) family. In terms of tissue distribution, highly expressed in placenta. Highly expressed in kidney cortex. In kidney, expressed specifically in the proximal and distal convoluted tubules and within Bowman capsule. Expressed in brain, particularly in dopaminergic neurons of the substantia nigra compacta, non-aminergic neurons of the ventral tegmental area, substantia nigra reticulata, locus coeruleus, hippocampus and cortex. In brain, also detected in astrocytes in the substantia nigra reticulata, several hypothalamic nuclei and nigrostriatal region. Expressed in neurons and glial cells of amygdala.

The protein resides in the cell membrane. It is found in the apical cell membrane. It localises to the basolateral cell membrane. The protein localises to the mitochondrion membrane. Its subcellular location is the endomembrane system. The protein resides in the nucleus membrane. It is found in the nucleus outer membrane. The enzyme catalyses (R)-noradrenaline(out) = (R)-noradrenaline(in). It catalyses the reaction (R)-adrenaline(out) = (R)-adrenaline(in). The catalysed reaction is serotonin(out) = serotonin(in). It carries out the reaction dopamine(out) = dopamine(in). The enzyme catalyses histamine(out) = histamine(in). It catalyses the reaction tyramine(in) = tyramine(out). The catalysed reaction is guanidine(out) = guanidine(in). It carries out the reaction agmatine(out) = agmatine(in). The enzyme catalyses spermidine(in) = spermidine(out). It catalyses the reaction L-histidyl-L-proline diketopiperazine(in) = L-histidyl-L-proline diketopiperazine(out). The catalysed reaction is (R)-salsolinol(in) = (R)-salsolinol(out). In terms of biological role, electrogenic voltage-dependent transporter that mediates the transport of a variety of organic cations such as endogenous bioactive amines, cationic drugs and xenobiotics. Cation cellular uptake or release is driven by the electrochemical potential, i.e. membrane potential and concentration gradient. Functions as a Na(+)- and Cl(-)-independent, bidirectional uniporter. Implicated in monoamine neurotransmitters uptake such as dopamine, adrenaline/epinephrine, noradrenaline/norepinephrine, homovanillic acid, histamine, serotonin and tyramine, thereby supporting a role in homeostatic regulation of aminergic neurotransmission in the brain. Transports dopaminergic neuromodulators cyclo(his-pro) and salsolinol with low efficiency. May be involved in the uptake and disposition of cationic compounds by renal clearance from the blood flow. May contribute to regulate the transport of cationic compounds in testis across the blood-testis-barrier. Mediates the transport of polyamine spermidine and putrescine. Mediates the bidirectional transport of polyamine agmatine. Also transports guanidine. May also mediate intracellular transport of organic cations, thereby playing a role in amine metabolism and intracellular signaling. In Mus musculus (Mouse), this protein is Solute carrier family 22 member 3.